Here is a 276-residue protein sequence, read N- to C-terminus: Large ribosomal subunit protein uL2 (276 aa).

Residues 225–276 (MNPNDHPHGGGEGRNPIGRNPVTPWGKPALGAKTRKKKNPSNRFIVKRRGKK) form a disordered region. A compositionally biased stretch (basic residues) spans 257–276 (KTRKKKNPSNRFIVKRRGKK).

It belongs to the universal ribosomal protein uL2 family. In terms of assembly, part of the 50S ribosomal subunit. Forms a bridge to the 30S subunit in the 70S ribosome.

Its function is as follows. One of the primary rRNA binding proteins. Required for association of the 30S and 50S subunits to form the 70S ribosome, for tRNA binding and peptide bond formation. It has been suggested to have peptidyltransferase activity; this is somewhat controversial. Makes several contacts with the 16S rRNA in the 70S ribosome. In Desulfitobacterium hafniense (strain DSM 10664 / DCB-2), this protein is Large ribosomal subunit protein uL2.